The chain runs to 886 residues: Protein suppressor of hairy wing (886 aa).

Disordered stretches follow at residues 24-62 (SVSP…GIKG) and 167-211 (DEVV…KNSG). Acidic residues predominate over residues 184 to 201 (VTEEEEEEEEDDLDEEGD). A C2H2-type 1; atypical zinc finger spans residues 221-243 (HVCGKCYKTFRRLMSLKKHLEFC). The C2H2-type 2 zinc-finger motif lies at 291-314 (INCPDCPKSFKTQTSYERHIFITH). A C2H2-type 3; atypical zinc finger spans residues 320–342 (YPCSICNANLRSEALLKLHEEQH). 9 consecutive C2H2-type zinc fingers follow at residues 349 to 367 (YACK…LKRH), 381 to 403 (MSCK…LKHH), 414 to 436 (YMCH…IRTH), 442 to 464 (FDCD…RRYH), 470 to 492 (YSCT…MKRH), 498 to 520 (HKCE…SKTH), 524 to 546 (FACD…VKEH), 554 to 578 (FSCT…AGDH), and 600 to 623 (TDCA…RSVH). Positions 571–587 (QHMDAGDHSEKSGEKPQ) are enriched in basic and acidic residues. The disordered stretch occupies residues 571–594 (QHMDAGDHSEKSGEKPQRAKRSST).

The protein resides in the nucleus. Component of the gypsy chromatin insulator complex which is required for the function of the gypsy chromatin insulator and other endogenous chromatin insulators. Chromatin insulators are regulatory elements which establish independent domains of transcriptional activity within eukaryotic genomes. Insulators have two defining properties; they can block the communication between an enhancer and a promoter when placed between them and can also buffer transgenes from position effect variegation (PEV). Insulators are proposed to structure the chromatin fiber into independent domains of differing transcriptional potential by promoting the formation of distinct chromatin loops. This chromatin looping may involve the formation of insulator bodies, where homotypic interactions between individual subunits of the insulator complex could promote the clustering of widely spaced insulators at the nuclear periphery. Within the gypsy insulator complex, this protein binds specifically to a region of the gypsy element located 3' of the 5' long terminal repeat (LTR), and may also mediate interaction with other endogenous insulators at sites distinct from those recognized by Cp190. Cooperates with pita and cliff to recruit Cp190 and regulate insulator function at the front-ultraabdominal (Fub) boundary. This Drosophila ananassae (Fruit fly) protein is Protein suppressor of hairy wing (su(Hw)).